The sequence spans 288 residues: Transmembrane and coiled-coil domain-containing protein 5A (288 aa).

The stretch at 13–105 (IISLNMDLER…VHSISELQRK (93 aa)) forms a coiled coil. The chain crosses the membrane as a helical span at residues 227-249 (SLLFSTLFFIRLLGYLIFHLSFI).

Testis-specific. Expressed in spermatogenic cells of testis but disappear by the time mature spermatozoa are formed (at protein level).

It localises to the endoplasmic reticulum membrane. It is found in the nucleus membrane. This chain is Transmembrane and coiled-coil domain-containing protein 5A (Tmco5a), found in Rattus norvegicus (Rat).